The sequence spans 53 residues: Large ribosomal subunit protein bL33A (53 aa).

It belongs to the bacterial ribosomal protein bL33 family.

In Mycoplasmoides gallisepticum (strain R(low / passage 15 / clone 2)) (Mycoplasma gallisepticum), this protein is Large ribosomal subunit protein bL33A.